The following is an 83-amino-acid chain: Putative membrane protein insertion efficiency factor (83 aa).

This sequence belongs to the UPF0161 family.

Its subcellular location is the cell membrane. Its function is as follows. Could be involved in insertion of integral membrane proteins into the membrane. The polypeptide is Putative membrane protein insertion efficiency factor (Staphylococcus saprophyticus subsp. saprophyticus (strain ATCC 15305 / DSM 20229 / NCIMB 8711 / NCTC 7292 / S-41)).